A 342-amino-acid chain; its full sequence is Dihydroorotase (342 aa).

Zn(2+)-binding residues include His-13 and His-15. Substrate is bound by residues 15-17 and Asn-41; that span reads HLR. 3 residues coordinate Zn(2+): Lys-98, His-135, and His-173. Lys-98 carries the N6-carboxylysine modification. Position 135 (His-135) interacts with substrate. Leu-218 provides a ligand contact to substrate. Asp-246 lines the Zn(2+) pocket. Asp-246 is an active-site residue. His-250 and Ala-262 together coordinate substrate.

The protein belongs to the metallo-dependent hydrolases superfamily. DHOase family. Class II DHOase subfamily. Homodimer. The cofactor is Zn(2+).

It catalyses the reaction (S)-dihydroorotate + H2O = N-carbamoyl-L-aspartate + H(+). The protein operates within pyrimidine metabolism; UMP biosynthesis via de novo pathway; (S)-dihydroorotate from bicarbonate: step 3/3. Functionally, catalyzes the reversible cyclization of carbamoyl aspartate to dihydroorotate. This chain is Dihydroorotase, found in Vibrio cholerae serotype O1 (strain ATCC 39315 / El Tor Inaba N16961).